The sequence spans 197 residues: Adenylylsulfatase HINT3 (197 aa).

The interval 14 to 43 (NPPGPNPTRDPTLRVSDCSSGSSGDGKVES) is disordered. One can recognise an HIT domain in the interval 51-158 (VFCKIIRGES…IPRKERDCLW (108 aa)). A Histidine triad motif motif is present at residues 143–147 (HTHIH). His145 serves as the catalytic Tele-AMP-histidine intermediate. Residue His147 participates in substrate binding.

It localises to the peroxisome. It catalyses the reaction adenosine 5'-phosphosulfate + H2O = sulfate + AMP + 2 H(+). Possesses adenylylsulfatase activity in vitro. This chain is Adenylylsulfatase HINT3, found in Arabidopsis thaliana (Mouse-ear cress).